Consider the following 454-residue polypeptide: COBRA-like protein 6 (454 aa).

The first 24 residues, 1–24, serve as a signal peptide directing secretion; the sequence is MGAMLNLLLVVTVILCSILSPTRF. N-linked (GlcNAc...) asparagine glycosylation is found at N104, N191, N320, N355, and N391. S429 is lipidated: GPI-anchor amidated serine. Positions 430-454 are cleaved as a propeptide — removed in mature form; sequence SSSSAVISSVSVVFCFLLHHLLLLV.

The protein belongs to the COBRA family. In terms of tissue distribution, expressed in flowers and siliques.

The protein resides in the cell membrane. The chain is COBRA-like protein 6 (COBL6) from Arabidopsis thaliana (Mouse-ear cress).